The primary structure comprises 821 residues: High affinity potassium transporter (821 aa).

Over residues 1-10 the composition is skewed to polar residues; sequence MSDSQSNKQN. Residues 1 to 47 form a disordered region; the sequence is MSDSQSNKQNQGEDDNNVSSSIESNENYPFRLNDEESEPQSSTTESM. Topologically, residues 1 to 57 are cytoplasmic; it reads MSDSQSNKQNQGEDDNNVSSSIESNENYPFRLNDEESEPQSSTTESMLKAKKQSWRQ. Over residues 17-27 the composition is skewed to low complexity; sequence NVSSSIESNEN. The helical transmembrane segment at 58-78 threads the bilayer; the sequence is VLMLGFSSLGAIYGDIGTSPL. Topologically, residues 79–101 are extracellular; sequence YVLNSIKYPNSSPTEEDIYGAIS. The helical transmembrane segment at 102 to 122 threads the bilayer; the sequence is IIFYLFTFIVIFKYILIVLFL. Over 123–190 the chain is Cytoplasmic; sequence GTNDGEGGQV…KASGFKTNPK (68 aa). A helical transmembrane segment spans residues 191 to 211; the sequence is LIKFISKFILFGCFFGCSLVM. Over 212–238 the chain is Extracellular; sequence SDGLLTPTTSVLSAIAGIQIANPSFND. Residues 239–259 form a helical membrane-spanning segment; it reads VLAVSEVVLIVLFLIQQFGSN. Residue Lys-260 is a topological domain, cytoplasmic. Residues 261–281 form a helical membrane-spanning segment; that stretch reads ISFTFAPIIFLWLIGLIISGI. Topologically, residues 282-306 are extracellular; that stretch reads YNIVKFHPAVFKSLSPYYAIQLLKH. The chain crosses the membrane as a helical span at residues 307 to 327; the sequence is SGIDVFSGAMLSITGTEAMFA. The Cytoplasmic portion of the chain corresponds to 328-340; that stretch reads DVGHFGRLPIQLT. The chain crosses the membrane as a helical span at residues 341 to 361; that stretch reads LTLFVYPALIICYLGQGAYII. Topologically, residues 362 to 386 are extracellular; sequence KHPEALSNPFFYSIPGGLNSWIYWV. The helical transmembrane segment at 387 to 407 threads the bilayer; sequence MFVLATLSTIIASQALILGVF. Topologically, residues 408-434 are cytoplasmic; that stretch reads SITSQLINLDCFPNFKIIHVSKKYAGK. The chain crosses the membrane as a helical span at residues 435–455; sequence VYIPAINWLLMIGVCATTAGF. Topologically, residues 456–463 are extracellular; sequence KNSNNVTA. N-linked (GlcNAc...) asparagine glycosylation occurs at Asn-460. Residues 464 to 484 form a helical membrane-spanning segment; that stretch reads AYGLGITLDFLVTSSLIMVCM. The Cytoplasmic portion of the chain corresponds to 485–491; that stretch reads TYVYNWN. A helical membrane pass occupies residues 492–512; it reads ILIPITYALIFLPLEVIMVIS. Over 513–516 the chain is Extracellular; that stretch reads NLKK. A helical membrane pass occupies residues 517–537; it reads ITHGAWFPLMMSGIFMMFLSF. Topologically, residues 538–821 are cytoplasmic; it reads WRWARSRKVN…KMFLGGVVRI (284 aa).

Belongs to the HAK/KUP transporter (TC 2.A.72) family.

It localises to the membrane. Functionally, major high-affinity potassium uptake protein. In Schwanniomyces occidentalis (Yeast), this protein is High affinity potassium transporter (HAK1).